We begin with the raw amino-acid sequence, 240 residues long: Spore coat polysaccharide biosynthesis protein SpsF (240 aa).

Belongs to the CMP-NeuNAc synthase family.

Its pathway is spore coat biogenesis; spore coat polysaccharide biosynthesis. This Bacillus subtilis (strain 168) protein is Spore coat polysaccharide biosynthesis protein SpsF (spsF).